We begin with the raw amino-acid sequence, 375 residues long: 23S rRNA (uracil(747)-C(5))-methyltransferase RlmC (375 aa).

Cys-3, Cys-11, Cys-14, and Cys-87 together coordinate [4Fe-4S] cluster. Gln-212, Phe-241, Glu-262, and Asn-307 together coordinate S-adenosyl-L-methionine. Cys-334 (nucleophile) is an active-site residue.

It belongs to the class I-like SAM-binding methyltransferase superfamily. RNA M5U methyltransferase family. RlmC subfamily.

It catalyses the reaction uridine(747) in 23S rRNA + S-adenosyl-L-methionine = 5-methyluridine(747) in 23S rRNA + S-adenosyl-L-homocysteine + H(+). Functionally, catalyzes the formation of 5-methyl-uridine at position 747 (m5U747) in 23S rRNA. This is 23S rRNA (uracil(747)-C(5))-methyltransferase RlmC from Pectobacterium atrosepticum (strain SCRI 1043 / ATCC BAA-672) (Erwinia carotovora subsp. atroseptica).